Here is a 474-residue protein sequence, read N- to C-terminus: Sugar transporter ERD6-like 17 (474 aa).

The next 12 membrane-spanning stretches (helical) occupy residues isoleucine 27–valine 47, phenylalanine 76–glycine 96, phenylalanine 106–phenylalanine 126, isoleucine 129–isoleucine 149, threonine 159–isoleucine 180, threonine 184–proline 204, threonine 266–isoleucine 286, isoleucine 302–valine 322, proline 329–phenylalanine 349, isoleucine 363–leucine 383, isoleucine 403–phenylalanine 423, and glycine 429–valine 449.

Belongs to the major facilitator superfamily. Sugar transporter (TC 2.A.1.1) family. In terms of tissue distribution, expressed in young seedlings.

The protein localises to the membrane. In terms of biological role, sugar transporter. The chain is Sugar transporter ERD6-like 17 from Arabidopsis thaliana (Mouse-ear cress).